We begin with the raw amino-acid sequence, 201 residues long: Large ribosomal subunit protein uL4 (201 aa).

Positions 39 to 72 (KRQGTSAQKSRSEVIGSGKKPWRQKGTGRARAGS) are disordered.

It belongs to the universal ribosomal protein uL4 family. As to quaternary structure, part of the 50S ribosomal subunit.

Its function is as follows. One of the primary rRNA binding proteins, this protein initially binds near the 5'-end of the 23S rRNA. It is important during the early stages of 50S assembly. It makes multiple contacts with different domains of the 23S rRNA in the assembled 50S subunit and ribosome. Forms part of the polypeptide exit tunnel. In Wigglesworthia glossinidia brevipalpis, this protein is Large ribosomal subunit protein uL4.